A 260-amino-acid polypeptide reads, in one-letter code: Proteasome subunit alpha 1 (260 aa).

The segment at 237–260 (AEADLLDTGEDADDEAEDEDATEE) is disordered. Residues 240–260 (DLLDTGEDADDEAEDEDATEE) show a composition bias toward acidic residues.

Belongs to the peptidase T1A family. In terms of assembly, the 20S proteasome core is composed of 14 alpha and 14 beta subunits that assemble into four stacked heptameric rings, resulting in a barrel-shaped structure. The two inner rings, each composed of seven catalytic beta subunits, are sandwiched by two outer rings, each composed of seven alpha subunits. The catalytic chamber with the active sites is on the inside of the barrel. Has a gated structure, the ends of the cylinder being occluded by the N-termini of the alpha-subunits. Is capped at one or both ends by the proteasome regulatory ATPase, PAN.

The protein localises to the cytoplasm. With respect to regulation, the formation of the proteasomal ATPase PAN-20S proteasome complex, via the docking of the C-termini of PAN into the intersubunit pockets in the alpha-rings, triggers opening of the gate for substrate entry. Interconversion between the open-gate and close-gate conformations leads to a dynamic regulation of the 20S proteasome proteolysis activity. Functionally, component of the proteasome core, a large protease complex with broad specificity involved in protein degradation. This is Proteasome subunit alpha 1 from Haloarcula marismortui (strain ATCC 43049 / DSM 3752 / JCM 8966 / VKM B-1809) (Halobacterium marismortui).